A 191-amino-acid polypeptide reads, in one-letter code: Fe/S biogenesis protein NfuA (191 aa).

Cys-149 and Cys-152 together coordinate [4Fe-4S] cluster.

The protein belongs to the NfuA family. In terms of assembly, homodimer. It depends on [4Fe-4S] cluster as a cofactor.

In terms of biological role, involved in iron-sulfur cluster biogenesis. Binds a 4Fe-4S cluster, can transfer this cluster to apoproteins, and thereby intervenes in the maturation of Fe/S proteins. Could also act as a scaffold/chaperone for damaged Fe/S proteins. The protein is Fe/S biogenesis protein NfuA of Escherichia coli O139:H28 (strain E24377A / ETEC).